Reading from the N-terminus, the 228-residue chain is Uracil-DNA glycosylase (228 aa).

The active-site Proton acceptor is Asp65.

The protein belongs to the uracil-DNA glycosylase (UDG) superfamily. UNG family.

The protein localises to the cytoplasm. It carries out the reaction Hydrolyzes single-stranded DNA or mismatched double-stranded DNA and polynucleotides, releasing free uracil.. Its function is as follows. Excises uracil residues from the DNA which can arise as a result of misincorporation of dUMP residues by DNA polymerase or due to deamination of cytosine. The chain is Uracil-DNA glycosylase from Lacticaseibacillus paracasei (strain ATCC 334 / BCRC 17002 / CCUG 31169 / CIP 107868 / KCTC 3260 / NRRL B-441) (Lactobacillus paracasei).